The sequence spans 429 residues: Arginine biosynthesis bifunctional protein ArgJ (429 aa).

The substrate site is built by T181, K207, T218, E302, N424, and S429. The Nucleophile role is filled by T218.

The protein belongs to the ArgJ family. In terms of assembly, heterotetramer of two alpha and two beta chains.

The protein localises to the cytoplasm. It catalyses the reaction N(2)-acetyl-L-ornithine + L-glutamate = N-acetyl-L-glutamate + L-ornithine. The catalysed reaction is L-glutamate + acetyl-CoA = N-acetyl-L-glutamate + CoA + H(+). Its pathway is amino-acid biosynthesis; L-arginine biosynthesis; L-ornithine and N-acetyl-L-glutamate from L-glutamate and N(2)-acetyl-L-ornithine (cyclic): step 1/1. The protein operates within amino-acid biosynthesis; L-arginine biosynthesis; N(2)-acetyl-L-ornithine from L-glutamate: step 1/4. Functionally, catalyzes two activities which are involved in the cyclic version of arginine biosynthesis: the synthesis of N-acetylglutamate from glutamate and acetyl-CoA as the acetyl donor, and of ornithine by transacetylation between N(2)-acetylornithine and glutamate. This Chlorobium chlorochromatii (strain CaD3) protein is Arginine biosynthesis bifunctional protein ArgJ.